Consider the following 124-residue polypeptide: Quinol oxidase subunit 4 (124 aa).

Helical transmembrane passes span 16–36 (IVGF…AVYT), 44–64 (LWII…MFMH), and 78–98 (TLFG…IFAA).

This sequence belongs to the cytochrome c oxidase bacterial subunit 4 family.

It localises to the cell membrane. The enzyme catalyses 2 a quinol + O2 = 2 a quinone + 2 H2O. Its function is as follows. Catalyzes quinol oxidation with the concomitant reduction of oxygen to water. Major component for energy conversion during vegetative growth. This chain is Quinol oxidase subunit 4 (qoxD), found in Bacillus subtilis (strain 168).